We begin with the raw amino-acid sequence, 141 residues long: Large ribosomal subunit protein uL16 (141 aa).

The protein belongs to the universal ribosomal protein uL16 family. As to quaternary structure, part of the 50S ribosomal subunit.

Binds 23S rRNA and is also seen to make contacts with the A and possibly P site tRNAs. This chain is Large ribosomal subunit protein uL16, found in Campylobacter jejuni subsp. jejuni serotype O:6 (strain 81116 / NCTC 11828).